Reading from the N-terminus, the 147-residue chain is Lysozyme C (147 aa).

A signal peptide spans 1–18; that stretch reads MRSLLILVLCFLPLAALG. The C-type lysozyme domain occupies 19–147; the sequence is KVFGRCELAA…VQAWIRGCRL (129 aa). Intrachain disulfides connect Cys-24-Cys-145, Cys-48-Cys-133, Cys-82-Cys-98, and Cys-94-Cys-112. Active-site residues include Glu-53 and Asp-70. Asp-119 lines the substrate pocket.

This sequence belongs to the glycosyl hydrolase 22 family. Monomer. In the egg white and polymorphonuclear leukocytes.

The protein localises to the secreted. It carries out the reaction Hydrolysis of (1-&gt;4)-beta-linkages between N-acetylmuramic acid and N-acetyl-D-glucosamine residues in a peptidoglycan and between N-acetyl-D-glucosamine residues in chitodextrins.. Lysozymes have primarily a bacteriolytic function; those in tissues and body fluids are associated with the monocyte-macrophage system and enhance the activity of immunoagents. Has bacteriolytic activity against M.luteus. The sequence is that of Lysozyme C (LYZ) from Gallus gallus (Chicken).